The following is a 186-amino-acid chain: Elongation factor P (186 aa).

This sequence belongs to the elongation factor P family.

It is found in the cytoplasm. Its pathway is protein biosynthesis; polypeptide chain elongation. Functionally, involved in peptide bond synthesis. Stimulates efficient translation and peptide-bond synthesis on native or reconstituted 70S ribosomes in vitro. Probably functions indirectly by altering the affinity of the ribosome for aminoacyl-tRNA, thus increasing their reactivity as acceptors for peptidyl transferase. This is Elongation factor P from Prochlorococcus marinus (strain MIT 9515).